The chain runs to 241 residues: B-cell receptor-associated protein 29 (241 aa).

Residues 1–6 (MTLQWA) are Lumenal-facing. Residues 7–27 (AVATFLYAEIGLILIFCLPFI) traverse the membrane as a helical segment. Topologically, residues 28 to 43 (PPQRWQKIFSFNVWGK) are cytoplasmic. Residues 44–64 (IATFWNKAFLTIIILLIVLFL) traverse the membrane as a helical segment. The Lumenal segment spans residues 65–103 (DAVREVRKYSSVHTIEKSSTSRPDAYEHTQMKLFRSQRN). A helical transmembrane segment spans residues 104-124 (LYISGFSLFFWLVLRRLVTLI). Residues 125 to 241 (TQLAKELSNK…RLERGNKKRL (117 aa)) lie on the Cytoplasmic side of the membrane. Residues 166-233 (GKDEECVLEA…KEHSELQDRL (68 aa)) adopt a coiled-coil conformation. The tract at residues 193–223 (KTSDALSKAQNDVMEMKMQSERLSKEYDQLL) is disordered. The segment covering 206–223 (MEMKMQSERLSKEYDQLL) has biased composition (basic and acidic residues). The Di-lysine motif motif lies at 238-241 (KKRL).

It belongs to the BCAP29/BCAP31 family. In terms of assembly, homodimer and heterodimer with BCAP31. Binds CASP8 as a complex containing BCAP31, BCAP29, BCL2 and/or BCL2L1. Interacts with VAMP3, VAMP1 and membrane IgD immunoglobulins. May interact with ACTG1 and non-muscle myosin II.

The protein localises to the endoplasmic reticulum membrane. Functionally, may play a role in anterograde transport of membrane proteins from the endoplasmic reticulum to the Golgi. May be involved in CASP8-mediated apoptosis. The sequence is that of B-cell receptor-associated protein 29 (BCAP29) from Pongo abelii (Sumatran orangutan).